Consider the following 89-residue polypeptide: Small ribosomal subunit protein uS15 (89 aa).

Belongs to the universal ribosomal protein uS15 family. Part of the 30S ribosomal subunit. Forms a bridge to the 50S subunit in the 70S ribosome, contacting the 23S rRNA.

One of the primary rRNA binding proteins, it binds directly to 16S rRNA where it helps nucleate assembly of the platform of the 30S subunit by binding and bridging several RNA helices of the 16S rRNA. Its function is as follows. Forms an intersubunit bridge (bridge B4) with the 23S rRNA of the 50S subunit in the ribosome. The chain is Small ribosomal subunit protein uS15 from Chlamydia muridarum (strain MoPn / Nigg).